Here is a 103-residue protein sequence, read N- to C-terminus: N(4)-acetylcytidine amidohydrolase (103 aa).

Residues 6–101 form the ASCH domain; it reads ITFFQRFQDD…QTQFYVIEFK (96 aa). The Proton acceptor role is filled by Lys-21. Thr-24 serves as the catalytic Nucleophile. Glu-74 serves as the catalytic Proton donor.

The protein belongs to the N(4)-acetylcytidine amidohydrolase family.

It carries out the reaction N(4)-acetylcytidine + H2O = cytidine + acetate + H(+). The catalysed reaction is N(4)-acetyl-2'-deoxycytidine + H2O = 2'-deoxycytidine + acetate + H(+). The enzyme catalyses N(4)-acetylcytosine + H2O = cytosine + acetate + H(+). In terms of biological role, catalyzes the hydrolysis of N(4)-acetylcytidine (ac4C). This Escherichia coli (strain K12 / MC4100 / BW2952) protein is N(4)-acetylcytidine amidohydrolase (yqfB).